A 293-amino-acid chain; its full sequence is tRNA(His) guanylyltransferase (293 aa).

Aspartate 29, glycine 30, and aspartate 76 together coordinate Mg(2+). GTP-binding positions include 29–34 and 75–76; these read DGRGFT and SD. The segment at 226–252 is disordered; it reads KKVSEEEAEEMSSSAVPEVKSKSQVEK.

It belongs to the tRNA(His) guanylyltransferase family. Mg(2+) is required as a cofactor.

The catalysed reaction is a 5'-end ribonucleotide-tRNA(His) + GTP + ATP + H2O = a 5'-end phospho-guanosine-ribonucleotide-tRNA(His) + AMP + 2 diphosphate + H(+). Adds a GMP to the 5'-end of tRNA(His) after transcription and RNase P cleavage. This chain is tRNA(His) guanylyltransferase (rgt-1), found in Neurospora crassa (strain ATCC 24698 / 74-OR23-1A / CBS 708.71 / DSM 1257 / FGSC 987).